The following is a 588-amino-acid chain: MAEVDNGGAQKSSASRKKRYQELDPETRMKRVAQNRAAQKAFRERKERKMKELERKVVDLENLTKLNEVETNFLRDQLSILVKELRKYRPETKQDHKVLKYLEKHKGGAAGAGNGAATGSVSTSTRHTDLAASNANRVSKDSSILPGAKIIRQDLESFNENRHFNVTGQLTPPGNTSSSTTANSVAANAKKQSIPHSDSSDSNESKNTWNTDPTSSEDWLDDVMTSHKQISRGQSGSGIDFNNFFDEQVSEFCTKLNQACGTKACPIPQSKSAATTPLPGTSSNGNSNSPMIINDTMGDVSLNMQGNEHGNATNNLVTDPAFLSNTWDDMSPASNQHSTGGAPGFGQLGFGDNLLGNDILFSPNSPAYSPSVLGSGRTQEVYRSPAVQKVVEKENESKSVNFPFINSSLAFPGDYDNNFFRETTDLNFDDNDQDDNFTNSNDLVNDYFTTNIPDTDNSDSALIANGLVKEEPSMQTEDTFKVQNTNDMLNSSRMKETIDNQNIGEKTTKDDNEDDDEDDENDNTVVPSRDDGLLRCSEIWDRITAHPKYSDIDIDGLCSELMAKAKCSERGVVINADDVQVALNKHMS.

A disordered region spans residues 1–49 (MAEVDNGGAQKSSASRKKRYQELDPETRMKRVAQNRAAQKAFRERKERK). Over residues 20–29 (YQELDPETRM) the composition is skewed to basic and acidic residues. The 64-residue stretch at 25 to 88 (PETRMKRVAQ…SILVKELRKY (64 aa)) folds into the bZIP domain. Positions 28-51 (RMKRVAQNRAAQKAFRERKERKMK) are basic motif. The leucine-zipper stretch occupies residues 53-60 (LERKVVDL). Residues 164–174 (FNVTGQLTPPG) show a composition bias toward polar residues. The interval 164-219 (FNVTGQLTPPGNTSSSTTANSVAANAKKQSIPHSDSSDSNESKNTWNTDPTSSEDW) is disordered. A compositionally biased stretch (low complexity) spans 175 to 189 (NTSSSTTANSVAANA). Transcription activation regions lie at residues 189 to 327 (AKKQ…SNTW) and 376 to 477 (GRTQ…MQTE). The segment covering 190-217 (KKQSIPHSDSSDSNESKNTWNTDPTSSE) has biased composition (polar residues). The interval 253–265 (CTKLNQACGTKAC) is n-CRD. Positions 487–529 (DMLNSSRMKETIDNQNIGEKTTKDDNEDDDEDDENDNTVVPSR) are disordered. The span at 511–522 (DNEDDDEDDEND) shows a compositional bias: acidic residues. Positions 536–567 (CSEIWDRITAHPKYSDIDIDGLCSELMAKAKC) are c-CRD. Positions 552-559 (IDIDGLCS) match the Nuclear export signal motif.

Its subcellular location is the nucleus. Transcription factor that plays a critical role in response to various stresses and reduces the stress through transcriptional activation of its target genes including multidrug transporter FLR1. The chain is bZip transcription factor GAP1 from Candida glabrata (strain ATCC 2001 / BCRC 20586 / JCM 3761 / NBRC 0622 / NRRL Y-65 / CBS 138) (Yeast).